We begin with the raw amino-acid sequence, 27 residues long: Small ribosomal subunit protein bTHX (27 aa).

Residues 1-13 (MGKGDRRTRRGKI) show a composition bias toward basic residues. Positions 1 to 27 (MGKGDRRTRRGKIWRGTYGKYRPRKKK) are disordered.

The protein belongs to the bacterial ribosomal protein bTHX family. Part of the 30S ribosomal subunit.

In terms of biological role, binds at the top of the head of the 30S subunit. It stabilizes a number of different RNA elements and thus is important for subunit structure. The protein is Small ribosomal subunit protein bTHX (rpsU) of Thermus aquaticus.